Consider the following 465-residue polypeptide: Argininosuccinate lyase (465 aa).

The protein belongs to the lyase 1 family. Argininosuccinate lyase subfamily.

Its subcellular location is the cytoplasm. It carries out the reaction 2-(N(omega)-L-arginino)succinate = fumarate + L-arginine. It functions in the pathway amino-acid biosynthesis; L-arginine biosynthesis; L-arginine from L-ornithine and carbamoyl phosphate: step 3/3. The polypeptide is Argininosuccinate lyase (Methanosphaera stadtmanae (strain ATCC 43021 / DSM 3091 / JCM 11832 / MCB-3)).